Consider the following 348-residue polypeptide: Tripartite motif-containing protein 16-like protein (348 aa).

Residues Tyr-139–Glu-337 form the B30.2/SPRY domain.

Belongs to the TRIM/RBCC family.

It localises to the cytoplasm. The polypeptide is Tripartite motif-containing protein 16-like protein (TRIM16L) (Homo sapiens (Human)).